A 447-amino-acid chain; its full sequence is MNLKTTLGLLAGRSSHFVLSRLGRGSTLPGKVALQFDKDILQSLAKNYEIVVVTGTNGKTLTTALTVGILKEVYGQVLTNPSGANMITGIATTFLTAKSSKTGKNIAVLEIDEASLSRICDYIQPSLFVITNIFRDQMDRFGEIYTTYNMILDAIRKVPTATVLLNGDSPLFYKPTIPNPIEYFGFDLEKGPAQLAHYNTEGILCPDCQGILKYEHNTYANLGAYICEGCGCKRPDLDYRLTKLVELTNNRSRFVIDGQEYGIQIGGLYNIYNALAAVAIARFLGADSQLIKQGFDKSRAVFGRQETFHIGDKECTLVLIKNPVGATQAIEMIKLAPYPFSLSVLLNANYADGIDTSWIWDADFEQITDMDIPEINAGGVRHSEIARRLRVTGYPAEKITETSNLEQVLKTIENQDCKHAYILATYTAMLEFRELLASRQIVRKEMN.

Zn(2+)-binding residues include Cys205, Cys208, Cys227, and Cys230. Asp355 is an active-site residue.

The protein belongs to the MurCDEF family. MurT subfamily. As to quaternary structure, forms a heterodimer with GatD.

The catalysed reaction is beta-D-GlcNAc-(1-&gt;4)-Mur2Ac(oyl-L-Ala-gamma-D-Glu-L-Lys-D-Ala-D-Ala)-di-trans,octa-cis-undecaprenyl diphosphate + L-glutamine + ATP + H2O = beta-D-GlcNAc-(1-&gt;4)-Mur2Ac(oyl-L-Ala-D-isoglutaminyl-L-Lys-D-Ala-D-Ala)-di-trans,octa-cis-undecaprenyl diphosphate + L-glutamate + ADP + phosphate + H(+). It catalyses the reaction beta-D-GlcNAc-(1-&gt;4)-Mur2Ac(oyl-L-Ala-gamma-D-Glu-L-Lys-D-Ala-D-Ala)-di-trans,octa-cis-undecaprenyl diphosphate + ATP = beta-D-GlcNAc-(1-&gt;4)-Mur2Ac(oyl-L-Ala-gamma-D-O-P-Glu-L-Lys-D-Ala-D-Ala)-di-trans,octa-cis-undecaprenyl diphosphate + ADP. It carries out the reaction beta-D-GlcNAc-(1-&gt;4)-Mur2Ac(oyl-L-Ala-gamma-D-O-P-Glu-L-Lys-D-Ala-D-Ala)-di-trans,octa-cis-undecaprenyl diphosphate + NH4(+) = beta-D-GlcNAc-(1-&gt;4)-Mur2Ac(oyl-L-Ala-D-isoglutaminyl-L-Lys-D-Ala-D-Ala)-di-trans,octa-cis-undecaprenyl diphosphate + phosphate + H(+). It participates in cell wall biogenesis; peptidoglycan biosynthesis. The lipid II isoglutaminyl synthase complex catalyzes the formation of alpha-D-isoglutamine in the cell wall lipid II stem peptide. The MurT subunit catalyzes the ATP-dependent amidation of D-glutamate residue of lipid II, converting it to an isoglutamine residue. The chain is Lipid II isoglutaminyl synthase (glutamine-hydrolyzing) subunit MurT from Streptococcus pneumoniae (strain ATCC BAA-255 / R6).